Consider the following 215-residue polypeptide: Interleukin-12 subunit alpha (215 aa).

An N-terminal signal peptide occupies residues 1-22; that stretch reads MCQSRYLLFLATLALLNHLSLA. Cystine bridges form between C33–C106, C60–C192, and C81–C119. N-linked (GlcNAc...) asparagine glycosylation occurs at N89.

It belongs to the IL-6 superfamily. In terms of assembly, heterodimer with IL12B; disulfide-linked. This heterodimer is known as interleukin IL-12. Heterodimer with EBI3/IL27B; not disulfide-linked. This heterodimer is known as interleukin IL-35. Interacts with NBR1; this interaction promotes IL-12 secretion.

The protein localises to the secreted. Its function is as follows. Heterodimerizes with IL12B to form the IL-12 cytokine or with EBI3/IL27B to form the IL-35 cytokine. IL-12 is primarily produced by professional antigen-presenting cells (APCs) such as B-cells and dendritic cells (DCs) as well as macrophages and granulocytes and regulates T-cell and natural killer-cell responses, induces the production of interferon-gamma (IFN-gamma), favors the differentiation of T-helper 1 (Th1) cells and is an important link between innate resistance and adaptive immunity. Mechanistically, exerts its biological effects through a receptor composed of IL12R1 and IL12R2 subunits. Binding to the receptor results in the rapid tyrosine phosphorylation of a number of cellular substrates including the JAK family kinases TYK2 and JAK2. In turn, recruited STAT4 gets phosphorylated and translocates to the nucleus where it regulates cytokine/growth factor responsive genes. As part of IL-35, plays essential roles in maintaining the immune homeostasis of the liver microenvironment and also functions as an immune-suppressive cytokine. Mediates biological events through unconventional receptors composed of IL12RB2 and gp130/IL6ST heterodimers or homodimers. Signaling requires the transcription factors STAT1 and STAT4, which form a unique heterodimer that binds to distinct DNA sites. The chain is Interleukin-12 subunit alpha (Il12a) from Mus musculus (Mouse).